We begin with the raw amino-acid sequence, 184 residues long: Ribosome maturation factor RimM (184 aa).

Positions Asp111 to Tyr184 constitute a PRC barrel domain.

This sequence belongs to the RimM family. Binds ribosomal protein uS19.

Its subcellular location is the cytoplasm. Functionally, an accessory protein needed during the final step in the assembly of 30S ribosomal subunit, possibly for assembly of the head region. Essential for efficient processing of 16S rRNA. May be needed both before and after RbfA during the maturation of 16S rRNA. It has affinity for free ribosomal 30S subunits but not for 70S ribosomes. The chain is Ribosome maturation factor RimM from Ralstonia nicotianae (strain ATCC BAA-1114 / GMI1000) (Ralstonia solanacearum).